Here is a 360-residue protein sequence, read N- to C-terminus: Histidinol-phosphate aminotransferase (360 aa).

Position 221 is an N6-(pyridoxal phosphate)lysine (Lys-221).

Belongs to the class-II pyridoxal-phosphate-dependent aminotransferase family. Histidinol-phosphate aminotransferase subfamily. Homodimer. Requires pyridoxal 5'-phosphate as cofactor.

It catalyses the reaction L-histidinol phosphate + 2-oxoglutarate = 3-(imidazol-4-yl)-2-oxopropyl phosphate + L-glutamate. It participates in amino-acid biosynthesis; L-histidine biosynthesis; L-histidine from 5-phospho-alpha-D-ribose 1-diphosphate: step 7/9. The protein is Histidinol-phosphate aminotransferase of Desulfitobacterium hafniense (strain DSM 10664 / DCB-2).